Reading from the N-terminus, the 171-residue chain is UPF0316 protein Exig_2248 (171 aa).

3 helical membrane passes run 4–24, 31–51, and 57–77; these read ILLI…RTIM, IIAG…LGIV, and TVGM…GGFV.

It belongs to the UPF0316 family.

Its subcellular location is the cell membrane. The chain is UPF0316 protein Exig_2248 from Exiguobacterium sibiricum (strain DSM 17290 / CCUG 55495 / CIP 109462 / JCM 13490 / 255-15).